The chain runs to 72 residues: Bowman-Birk type proteinase inhibitor (72 aa).

7 disulfide bridges follow: cysteine 8/cysteine 61, cysteine 9/cysteine 24, cysteine 12/cysteine 57, cysteine 14/cysteine 22, cysteine 31/cysteine 38, cysteine 35/cysteine 50, and cysteine 40/cysteine 48.

The protein belongs to the Bowman-Birk serine protease inhibitor family.

This inhibitor has two domains, each with separate antiprotease activity. 1 mole of inhibitor inhibits either 1 mole of trypsin or 2 moles of chymotrypsin, stoichiometrically. The polypeptide is Bowman-Birk type proteinase inhibitor (Vicia sativa subsp. nigra (Common vetch)).